The following is a 553-amino-acid chain: Glycerol kinase 3 (553 aa).

Position 20 (threonine 20) interacts with substrate. Position 24 (arginine 24) interacts with ATP. Substrate-binding residues include arginine 94, tyrosine 148, and aspartate 259. ATP-binding positions include threonine 281, glycine 326, and 427 to 431; that span reads GMTSN.

The protein belongs to the FGGY kinase family.

The protein resides in the mitochondrion outer membrane. It localises to the cytoplasm. The enzyme catalyses glycerol + ATP = sn-glycerol 3-phosphate + ADP + H(+). The protein operates within polyol metabolism; glycerol degradation via glycerol kinase pathway; sn-glycerol 3-phosphate from glycerol: step 1/1. May be involved in the regulation of glycerol uptake and metabolism. The sequence is that of Glycerol kinase 3 from Homo sapiens (Human).